Reading from the N-terminus, the 141-residue chain is MQRKHKRILFVAVSFIALGCVSAFVLFELSKSISFFCTPTELVADPIKSSRYPIRVGGMIVKGSIVRHGDSVTFSITDLGTELEVTYRGVLPPMFGEDVGAIAKGRFVDGVFIAEELLAKHDEKYMPKKYSSSDAAVIGSS.

The Cytoplasmic segment spans residues 1-7 (MQRKHKR). Residues 8–28 (ILFVAVSFIALGCVSAFVLFE) form a helical; Signal-anchor for type II membrane protein membrane-spanning segment. Residues 29–141 (LSKSISFFCT…SSDAAVIGSS (113 aa)) are Periplasmic-facing. Positions 121 and 125 each coordinate heme.

This sequence belongs to the CcmE/CycJ family.

It is found in the cell inner membrane. In terms of biological role, heme chaperone required for the biogenesis of c-type cytochromes. Transiently binds heme delivered by CcmC and transfers the heme to apo-cytochromes in a process facilitated by CcmF and CcmH. This chain is Cytochrome c-type biogenesis protein CcmE, found in Anaplasma phagocytophilum (strain HZ).